A 509-amino-acid polypeptide reads, in one-letter code: ATP synthase subunit alpha (509 aa).

169–176 (GDRQTGKT) provides a ligand contact to ATP.

Belongs to the ATPase alpha/beta chains family. In terms of assembly, F-type ATPases have 2 components, CF(1) - the catalytic core - and CF(0) - the membrane proton channel. CF(1) has five subunits: alpha(3), beta(3), gamma(1), delta(1), epsilon(1). CF(0) has three main subunits: a(1), b(2) and c(9-12). The alpha and beta chains form an alternating ring which encloses part of the gamma chain. CF(1) is attached to CF(0) by a central stalk formed by the gamma and epsilon chains, while a peripheral stalk is formed by the delta and b chains.

It is found in the cell inner membrane. The enzyme catalyses ATP + H2O + 4 H(+)(in) = ADP + phosphate + 5 H(+)(out). Produces ATP from ADP in the presence of a proton gradient across the membrane. The alpha chain is a regulatory subunit. The polypeptide is ATP synthase subunit alpha (Rhizobium etli (strain CIAT 652)).